A 1323-amino-acid chain; its full sequence is Receptor tyrosine-protein kinase let-23 (1323 aa).

The signal sequence occupies residues 1 to 20; sequence MRYPPSIGSILLIIPIFLTF. The Extracellular segment spans residues 21-818; it reads FGNSNAQLWK…DIASRQRKTR (798 aa). Asn-91 and Asn-169 each carry an N-linked (GlcNAc...) asparagine glycan. Intrachain disulfides connect Cys-220-Cys-228, Cys-224-Cys-236, Cys-244-Cys-251, Cys-248-Cys-262, Cys-263-Cys-271, Cys-267-Cys-279, Cys-282-Cys-291, Cys-295-Cys-322, Cys-326-Cys-337, Cys-341-Cys-356, and Cys-359-Cys-364. N-linked (GlcNAc...) asparagine glycosylation is present at Asn-255. Asn-376 carries an N-linked (GlcNAc...) asparagine glycan. Cystine bridges form between Cys-520–Cys-529, Cys-524–Cys-537, Cys-540–Cys-549, Cys-553–Cys-567, Cys-570–Cys-577, Cys-574–Cys-585, Cys-588–Cys-604, Cys-608–Cys-620, Cys-623–Cys-632, Cys-627–Cys-644, Cys-647–Cys-660, Cys-670–Cys-693, Cys-696–Cys-703, Cys-700–Cys-715, Cys-717–Cys-731, Cys-735–Cys-750, Cys-753–Cys-763, Cys-757–Cys-771, Cys-774–Cys-787, and Cys-791–Cys-805. Asn-561 carries an N-linked (GlcNAc...) asparagine glycan. Asn-655 carries N-linked (GlcNAc...) asparagine glycosylation. Residue Asn-746 is glycosylated (N-linked (GlcNAc...) asparagine). An N-linked (GlcNAc...) asparagine glycan is attached at Asn-776. Residues 819-839 form a helical membrane-spanning segment; the sequence is MVIIGSVLFGFAVMFLFILLV. Residues 840 to 1323 are Cytoplasmic-facing; sequence YWRCQRIGKK…EEVSQKETCL (484 aa). The region spanning 885–1152 is the Protein kinase domain; it reads TKLDKKLGAG…EFCKVPQLFL (268 aa). ATP contacts are provided by residues 891–899 and Lys-919; that span reads LGAGAFGTV. Asp-1010 serves as the catalytic Proton acceptor. Polar residues predominate over residues 1265 to 1289; it reads GQTELSPSNGDYYNQPNTPSSSSGY. The segment at 1265–1323 is disordered; that stretch reads GQTELSPSNGDYYNQPNTPSSSSGYYNEPHLKTKKPETSEEAEAVQYENEEVSQKETCL. The segment covering 1293 to 1302 has biased composition (basic and acidic residues); the sequence is PHLKTKKPET. Acidic residues predominate over residues 1303 to 1315; sequence SEEAEAVQYENEE.

This sequence belongs to the protein kinase superfamily. Tyr protein kinase family. EGF receptor subfamily. Expressed in vulval precursor cells (at protein level). Expressed in ALA neurons, 2 ventral head neurons, a single neuron in the tail, pharyngeal-intestinal valve and posterior arcade epithelial cells.

Its subcellular location is the apical cell membrane. It is found in the basolateral cell membrane. The catalysed reaction is L-tyrosyl-[protein] + ATP = O-phospho-L-tyrosyl-[protein] + ADP + H(+). Its function is as follows. Tyrosine-protein kinase receptor which, upon binding ligand lin-3, activates 2 signaling cascades: the let-60/Ras and MAP kinase signaling pathway and the let-60-independent phospholipase C-mediated Ca(2+) signaling pathway. Each pathway regulates distinct functions. By activating let-60/Ras, regulates larval development, induction of vulva cell precursors during vulva development, male spicule formation and posterior development of the epidermis. Probably by activating phospholipase plc-3 and inositol 1,4,5-trisphosphate receptor itr-1 signaling cascade downstream of ligand lin-3, plays a role in ovulation by promoting ovulatory gonadal sheath cell contractions. Probably by regulating neuronal transmission in ALA neurons, mediates, independently of let-60/Ras, the decrease in pharyngeal pumping and locomotion during the quiescent state that precedes each larval molt, downstream of lin-3 and upstream of plc-3. The chain is Receptor tyrosine-protein kinase let-23 from Caenorhabditis elegans.